The primary structure comprises 132 residues: Holo-[acyl-carrier-protein] synthase (132 aa).

2 residues coordinate Mg(2+): aspartate 8 and glutamate 62.

It belongs to the P-Pant transferase superfamily. AcpS family. It depends on Mg(2+) as a cofactor.

It is found in the cytoplasm. The catalysed reaction is apo-[ACP] + CoA = holo-[ACP] + adenosine 3',5'-bisphosphate + H(+). Functionally, transfers the 4'-phosphopantetheine moiety from coenzyme A to a Ser of acyl-carrier-protein. This Polaromonas sp. (strain JS666 / ATCC BAA-500) protein is Holo-[acyl-carrier-protein] synthase.